Consider the following 308-residue polypeptide: Ribosomal RNA small subunit methyltransferase H (308 aa).

Residues 36–38 (GGH), D55, F86, D103, and Q110 contribute to the S-adenosyl-L-methionine site.

It belongs to the methyltransferase superfamily. RsmH family.

The protein resides in the cytoplasm. It catalyses the reaction cytidine(1402) in 16S rRNA + S-adenosyl-L-methionine = N(4)-methylcytidine(1402) in 16S rRNA + S-adenosyl-L-homocysteine + H(+). In terms of biological role, specifically methylates the N4 position of cytidine in position 1402 (C1402) of 16S rRNA. This Helicobacter pylori (strain HPAG1) protein is Ribosomal RNA small subunit methyltransferase H.